We begin with the raw amino-acid sequence, 353 residues long: Uroporphyrinogen decarboxylase (353 aa).

Substrate contacts are provided by residues 25-29, Asp-74, Tyr-151, Ser-206, and His-325; that span reads RQAGR.

The protein belongs to the uroporphyrinogen decarboxylase family. In terms of assembly, homodimer.

The protein localises to the cytoplasm. The enzyme catalyses uroporphyrinogen III + 4 H(+) = coproporphyrinogen III + 4 CO2. Its pathway is porphyrin-containing compound metabolism; protoporphyrin-IX biosynthesis; coproporphyrinogen-III from 5-aminolevulinate: step 4/4. Functionally, catalyzes the decarboxylation of four acetate groups of uroporphyrinogen-III to yield coproporphyrinogen-III. The chain is Uroporphyrinogen decarboxylase from Chloroherpeton thalassium (strain ATCC 35110 / GB-78).